The following is a 147-amino-acid chain: Phospholipase A2 SSD1043 (147 aa).

The first 22 residues, 1–22 (MSPKFMFFSIIAVWSCAAVTEA), serve as a signal peptide directing secretion. The propeptide occupies 23-28 (LFIQHR). Cystine bridges form between Cys-55-Cys-71, Cys-70-Cys-130, Cys-77-Cys-123, Cys-86-Cys-116, and Cys-109-Cys-121. Ca(2+)-binding residues include Gly-56 and Gly-58. Residue His-74 is part of the active site. Asp-75 contributes to the Ca(2+) binding site. Asp-124 is a catalytic residue.

Requires Ca(2+) as cofactor. As to expression, expressed by the venom gland.

The protein localises to the secreted. The enzyme catalyses a 1,2-diacyl-sn-glycero-3-phosphocholine + H2O = a 1-acyl-sn-glycero-3-phosphocholine + a fatty acid + H(+). In terms of biological role, PLA2 catalyzes the calcium-dependent hydrolysis of the 2-acyl groups in 3-sn-phosphoglycerides. This Scolopendra dehaani (Thai centipede) protein is Phospholipase A2 SSD1043.